The sequence spans 438 residues: Mitochondrial distribution and morphology protein 12 (438 aa).

The SMP-LTD domain occupies 1–438; it reads MSIEVDWAAA…VYPSFWTFLV (438 aa). Disordered stretches follow at residues 110-154, 185-277, and 353-379; these read SFSH…TSTL, SDSG…MRER, and GSEQSQGSQNPSDDGRPRSGGDQKDKE. The segment covering 212-226 has biased composition (polar residues); it reads DTTNSTSRPSTANTL. Residues 227-245 show a composition bias toward low complexity; it reads PSHPSLGHSGSSGSNPHTS. The span at 354-364 shows a compositional bias: polar residues; it reads SEQSQGSQNPS. The segment covering 365–379 has biased composition (basic and acidic residues); it reads DDGRPRSGGDQKDKE.

Belongs to the MDM12 family. In terms of assembly, component of the ER-mitochondria encounter structure (ERMES) or MDM complex, composed of mmm1, mdm10, mdm12 and mdm34. A mmm1 homodimer associates with one molecule of mdm12 on each side in a pairwise head-to-tail manner, and the SMP-LTD domains of mmm1 and mdm12 generate a continuous hydrophobic tunnel for phospholipid trafficking.

It localises to the mitochondrion outer membrane. Its subcellular location is the endoplasmic reticulum membrane. Its function is as follows. Component of the ERMES/MDM complex, which serves as a molecular tether to connect the endoplasmic reticulum (ER) and mitochondria. Components of this complex are involved in the control of mitochondrial shape and protein biogenesis, and function in nonvesicular lipid trafficking between the ER and mitochondria. Mdm12 is required for the interaction of the ER-resident membrane protein mmm1 and the outer mitochondrial membrane-resident beta-barrel protein mdm10. The mdm12-mmm1 subcomplex functions in the major beta-barrel assembly pathway that is responsible for biogenesis of all mitochondrial outer membrane beta-barrel proteins, and acts in a late step after the SAM complex. The mdm10-mdm12-mmm1 subcomplex further acts in the TOM40-specific pathway after the action of the mdm12-mmm1 complex. Essential for establishing and maintaining the structure of mitochondria and maintenance of mtDNA nucleoids. The polypeptide is Mitochondrial distribution and morphology protein 12 (Penicillium rubens (strain ATCC 28089 / DSM 1075 / NRRL 1951 / Wisconsin 54-1255) (Penicillium chrysogenum)).